A 589-amino-acid chain; its full sequence is UvrABC system protein C (589 aa).

One can recognise a GIY-YIG domain in the interval 10–87; that stretch reads ESSGVYLMKK…IKKYSPKYNI (78 aa). A UVR domain is found at 197–232; it reads SKLINELTALMNKASQDMDFEKSIIYREQIKELKSI.

Belongs to the UvrC family. As to quaternary structure, interacts with UvrB in an incision complex.

Its subcellular location is the cytoplasm. The UvrABC repair system catalyzes the recognition and processing of DNA lesions. UvrC both incises the 5' and 3' sides of the lesion. The N-terminal half is responsible for the 3' incision and the C-terminal half is responsible for the 5' incision. The polypeptide is UvrABC system protein C (Fusobacterium nucleatum subsp. nucleatum (strain ATCC 25586 / DSM 15643 / BCRC 10681 / CIP 101130 / JCM 8532 / KCTC 2640 / LMG 13131 / VPI 4355)).